Reading from the N-terminus, the 486-residue chain is Patatin-like phospholipase domain-containing protein 2 (486 aa).

Topologically, residues 1-8 (MFPKETTW) are cytoplasmic. The chain crosses the membrane as a helical span at residues 9–29 (NISFAGCGFLGVYHIGVASCL). The PNPLA domain maps to 10–179 (ISFAGCGFLG…SDNLPLYELK (170 aa)). Residues 14–19 (GCGFLG) carry the GXGXXG motif. Residues 30 to 42 (REHAPFLVANATH) are Extracellular-facing. N39 carries N-linked (GlcNAc...) asparagine glycosylation. The chain crosses the membrane as a helical span at residues 43–63 (IYGASAGALTATALVTGACLG). The GXSXG signature appears at 45–49 (GASAG). The active-site Nucleophile is S47. At 64–137 (EAGANIIEVS…IITHFNSKEE (74 aa)) the chain is on the cytoplasmic side. A Glycyl lysine isopeptide (Lys-Gly) (interchain with G-Cter in ubiquitin) cross-link involves residue K92. Residues 138–158 (LIQANVCSTFIPVYCGLIPPS) form a helical membrane-spanning segment. Over 159 to 334 (LQGVRYVDGG…TTLSNMLPVR (176 aa)) the chain is Extracellular. Residue D166 is the Proton acceptor of the active site. The DGA/G motif lies at 166 to 168 (DGG). The helical transmembrane segment at 335–355 (LAMAMMVPYTLPLESAVSFTI) threads the bilayer. At 356 to 486 (RLLEWLPDVP…PQHPPSSPPC (131 aa)) the chain is on the cytoplasmic side. S377 is subject to Phosphoserine; in vitro. S399 and S409 each carry phosphoserine; by PKA. S433 bears the Phosphoserine; in vitro mark.

In terms of assembly, interacts with ABHD5; this association stimulates PNPLA2 triglyceride hydrolase activity. Interacts with SERPINF1; this interaction stimulates the phospholipase A2 activity of PNPLA2. Despite a colocalization in lipid droplets, it probably does not interact with PLIN. Interacts with PLIN5; prevents interaction with ABHD5. Interacts with FAF2. In terms of processing, phosphorylation at Ser-409 by PKA is increased during fasting and moderate intensity exercise, and moderately increases lipolytic activity. Post-translationally, ubiquitinated by PEX2 in response to reactive oxygen species (ROS), leading to its degradation. Ubiquitination is stimulated by LDAH.

The protein resides in the lipid droplet. Its subcellular location is the cell membrane. It localises to the cytoplasm. It carries out the reaction a triacylglycerol + H2O = a diacylglycerol + a fatty acid + H(+). The catalysed reaction is a triacylglycerol + H2O = a 1,2-diacylglycerol + a fatty acid + H(+). The enzyme catalyses a triacylglycerol + H2O = a 1,3-diacylglycerol + a fatty acid + H(+). It catalyses the reaction a triacyl-sn-glycerol + H2O = a 1,3-diacyl-sn-glycerol + a fatty acid + H(+). It carries out the reaction a triacyl-sn-glycerol + H2O = a 2,3-diacyl-sn-glycerol + a fatty acid + H(+). The catalysed reaction is a 1-acylglycerol + a 1,3-diacylglycerol = a triacylglycerol + glycerol. The enzyme catalyses a 1-acylglycerol + a 1,2-diacylglycerol = a triacylglycerol + glycerol. It catalyses the reaction 2 a 1-acylglycerol = a 1,2-diacylglycerol + glycerol. It carries out the reaction a triacylglycerol + all-trans-retinol = an all-trans-retinyl ester + a diacylglycerol. The catalysed reaction is 1,2-di-(9Z-octadecenoyl)-glycerol + (9Z)-octadecenoate + H(+) = 1,2,3-tri-(9Z-octadecenoyl)-glycerol + H2O. The enzyme catalyses 1,2,3-tri-(9Z-octadecenoyl)-glycerol + H2O = 1,3-di-(9Z-octadecenoyl)-glycerol + (9Z)-octadecenoate + H(+). It catalyses the reaction 1-(9Z-octadecenoyl)-glycerol + 1,3-di-(9Z-octadecenoyl)-glycerol = 1,2,3-tri-(9Z-octadecenoyl)-glycerol + glycerol. It carries out the reaction 1-(9Z-octadecenoyl)-glycerol + 1,2-di-(9Z-octadecenoyl)-glycerol = 1,2,3-tri-(9Z-octadecenoyl)-glycerol + glycerol. The catalysed reaction is 2 1-(9Z-octadecenoyl)-glycerol = 1,2-di-(9Z-octadecenoyl)-glycerol + glycerol. The enzyme catalyses 1,2,3-tri-(9Z-octadecenoyl)-glycerol + all-trans-retinol = all-trans-retinyl 9Z-octadecenoate + di-(9Z)-octadecenoylglycerol. It catalyses the reaction 1,2,3-tri-(9Z)-hexadecenoylglycerol + H2O = 1,3-di-(9Z)-hexadecenoylglycerol + (9Z)-hexadecenoate + H(+). It carries out the reaction 1,2,3-tri-(9Z,12Z)-octadecadienoylglycerol + H2O = 1,3-di-(9Z,12Z)-octadecadienoylglycerol + (9Z,12Z)-octadecadienoate + H(+). The catalysed reaction is 1,2,3-tri-(9Z,12Z,15Z)-octadecatrienoylglycerol + H2O = 1,3-di-(9Z,12Z,15Z)-octadecatrienoylglycerol + (9Z,12Z,15Z)-octadecatrienoate + H(+). The enzyme catalyses 1,3-di-(9Z)-octadecenoyl-2-hexadecanoylglycerol + H2O = 1,3-di-(9Z-octadecenoyl)-glycerol + hexadecanoate + H(+). It catalyses the reaction 1,2-di-(9Z)-octadecenoyl-3-hexadecanoyl-sn-glycerol + H2O = 1-(9Z)-octadecenoyl-3-hexadecanoyl-sn-glycerol + (9Z)-octadecenoate + H(+). It carries out the reaction 1-hexadecanoyl-2,3-di-(9Z)-octadecenoyl-sn-glycerol + H2O = 1-hexadecanoyl-3-(9Z)-octadecenoyl-sn-glycerol + (9Z)-octadecenoate + H(+). The catalysed reaction is 1,2,3-tri-(9Z-octadecenoyl)-glycerol + H2O = 2,3-di-(9Z)-octadecenoyl-sn-glycerol + (9Z)-octadecenoate + H(+). The enzyme catalyses 1,2,3-tri-(9Z)-hexadecenoylglycerol + H2O = 2,3-di-(9Z)-hexadecenoyl-sn-glycerol + (9Z)-hexadecenoate + H(+). It catalyses the reaction 1,2,3-tri-(9Z,12Z)-octadecadienoylglycerol + H2O = 2,3-di-(9Z,12Z)-octadecadienoyl-sn-glycerol + (9Z,12Z)-octadecadienoate + H(+). It carries out the reaction 1,2,3-tri-(9Z,12Z,15Z)-octadecatrienoylglycerol + H2O = 2,3-di-(9Z,12Z,15Z)-octadecatrienoyl-sn-glycerol + (9Z,12Z,15Z)-octadecatrienoate + H(+). The catalysed reaction is 1,3-di-(9Z)-octadecenoyl-2-hexadecanoylglycerol + H2O = 2-hexadecanoyl-3-(9Z)-octadecenoyl-sn-glycerol + (9Z)-octadecenoate + H(+). The enzyme catalyses 1-hexadecanoyl-2,3-di-(9Z)-octadecenoyl-sn-glycerol + H2O = 2,3-di-(9Z)-octadecenoyl-sn-glycerol + hexadecanoate + H(+). It catalyses the reaction 1,2-di-(9Z)-octadecenoyl-3-hexadecanoyl-sn-glycerol + H2O = 2-(9Z-octadecenoyl)-3-hexadecanoyl-sn-glycerol + (9Z)-octadecenoate + H(+). It carries out the reaction a 1,2-diacyl-sn-glycero-3-phosphocholine + H2O = a 1-acyl-sn-glycero-3-phosphocholine + a fatty acid + H(+). The catalysed reaction is 1,2,3-tri-(9Z-octadecenoyl)-glycerol + 9-hydroxy-octadecanoate = 9-(9Z-octadecenoyloxy)-octadecanoate + 2,3-di-(9Z)-octadecenoyl-sn-glycerol. The enzyme catalyses 1-hexadecanoyl-2,3-di-(9Z)-octadecenoyl-sn-glycerol + 9-hydroxy-octadecanoate = 9-hexadecanoyloxy-octadecanoate + 2,3-di-(9Z)-octadecenoyl-sn-glycerol. It catalyses the reaction 1,2,3-tri-(10Z)-heptadecenoylglycerol + 9-hydroxy-octadecanoate = 2,3-di-(10Z-heptadecenoyl)-sn-glycerol + 9-(10Z-heptadecenoyloxy)-octadecanoate. It carries out the reaction 1,2,3-tri-(9Z,12Z)-octadecadienoylglycerol + 9-hydroxy-octadecanoate = 2,3-di-(9Z,12Z)-octadecadienoyl-sn-glycerol + 9-(9Z,12Z-octadecadienoyloxy)-octadecanoate. The catalysed reaction is 1,2,3-tri-(9Z)-hexadecenoylglycerol + 9-hydroxy-octadecanoate = 2,3-di-(9Z)-hexadecenoyl-sn-glycerol + 9-(9Z-hexadecenoyloxy)-octadecanoate. The enzyme catalyses 9-hydroxy-octadecanoate + 1,2-di-(9Z-octadecenoyl)-sn-glycerol = 9-(9Z-octadecenoyloxy)-octadecanoate + 2-(9Z-octadecenoyl)-glycerol. It catalyses the reaction 1-hexadecanoyl-2,3-di-(9Z)-octadecenoyl-sn-glycerol + 9-hydroxy-octadecanoate = 1-hexadecanoyl-3-(9Z)-octadecenoyl-sn-glycerol + 9-(9Z-octadecenoyloxy)-octadecanoate. Its pathway is glycerolipid metabolism; triacylglycerol degradation. Functionally, catalyzes the initial step in triglyceride hydrolysis in adipocyte and non-adipocyte lipid droplets. Exhibits a strong preference for the hydrolysis of long-chain fatty acid esters at the sn-2 position of the glycerol backbone and acts coordinately with LIPE/HLS and DGAT2 within the lipolytic cascade. Also possesses acylglycerol transacylase and phospholipase A2 activities. Transfers fatty acid from triglyceride to retinol, hydrolyzes retinylesters, and generates 1,3-diacylglycerol from triglycerides. Regulates adiposome size and may be involved in the degradation of adiposomes. Catalyzes the formation of an ester bond between hydroxy fatty acids and fatty acids derived from triglycerides or diglycerides to generate fatty acid esters of hydroxy fatty acids (FAHFAs) in adipocytes. Acts antagonistically with LDAH in regulation of cellular lipid stores. Inhibits LDAH-stimulated lipid droplet fusion. May play an important role in energy homeostasis. May play a role in the response of the organism to starvation, enhancing hydrolysis of triglycerides and providing free fatty acids to other tissues to be oxidized in situations of energy depletion. In Bos taurus (Bovine), this protein is Patatin-like phospholipase domain-containing protein 2 (PNPLA2).